Reading from the N-terminus, the 657-residue chain is tRNA uridine 5-carboxymethylaminomethyl modification enzyme MnmG (657 aa).

Residue 13-18 (GGGHAG) participates in FAD binding. An NAD(+)-binding site is contributed by 281–295 (GPRYCPSVEDKINRF).

This sequence belongs to the MnmG family. As to quaternary structure, homodimer. Heterotetramer of two MnmE and two MnmG subunits. FAD serves as cofactor.

Its subcellular location is the cytoplasm. Its function is as follows. NAD-binding protein involved in the addition of a carboxymethylaminomethyl (cmnm) group at the wobble position (U34) of certain tRNAs, forming tRNA-cmnm(5)s(2)U34. This is tRNA uridine 5-carboxymethylaminomethyl modification enzyme MnmG from Acidovorax ebreus (strain TPSY) (Diaphorobacter sp. (strain TPSY)).